A 211-amino-acid polypeptide reads, in one-letter code: Small ribosomal subunit protein uS3 (211 aa).

Residues 16–85 (IDEYFKGKLV…NPQIEVKPLE (70 aa)) enclose the KH type-2 domain.

It belongs to the universal ribosomal protein uS3 family. As to quaternary structure, part of the 30S ribosomal subunit.

Its function is as follows. Binds the lower part of the 30S subunit head. This Methanococcus vannielii (strain ATCC 35089 / DSM 1224 / JCM 13029 / OCM 148 / SB) protein is Small ribosomal subunit protein uS3.